A 1396-amino-acid polypeptide reads, in one-letter code: Sterol 3-beta-glucosyltransferase (1396 aa).

The segment covering 1–16 has biased composition (basic and acidic residues); the sequence is MRPFIDDAKRRAERRL. Disordered stretches follow at residues 1 to 21, 40 to 64, 83 to 196, and 209 to 232; these read MRPFIDDAKRRAERRLSASRQ, DADDAQMDYTAPPSSNDSRDGMQYM, ARFD…RAAP, and ETENPEENPQTLEEKEQGVSKKSQ. Over residues 94-107 the composition is skewed to basic and acidic residues; the sequence is ETRTRPRFLSEKPF. Positions 186-196 are enriched in low complexity; sequence RPRSATPRAAP. The region spanning 238 to 273 is the GRAM 1 domain; it reads RQLMEMFRFPTPEKVVVEYACSLLQSMLLQGYMYVT. Residues 289 to 388 enclose the PH domain; it reads RVIKSGYIYK…WVRALQKVIF (100 aa). Disordered regions lie at residues 460 to 532 and 571 to 627; these read GTPT…SSSS and TIHT…ESKD. 2 stretches are compositionally biased toward polar residues: residues 484-532 and 571-584; these read GSQN…SSSS and TIHTWQQRTSGTAR. Basic and acidic residues predominate over residues 588–602; it reads RHSDEITRSTTEHGL. The 67-residue stretch at 717-783 folds into the GRAM 2 domain; the sequence is ERFRAHFALP…HDIENVEKEK (67 aa). 10 residues coordinate UDP-alpha-D-glucose: Ser-905, Arg-906, Asp-908, Ala-1208, His-1210, His-1223, Gly-1227, Thr-1228, Asp-1247, and Gln-1248. The segment covering 1324–1343 has biased composition (low complexity); sequence SSISSTPFSPTPSTKTSDDQ. Residues 1324 to 1346 are disordered; the sequence is SSISSTPFSPTPSTKTSDDQNAN.

This sequence belongs to the glycosyltransferase 28 family.

It localises to the cytoplasm. It is found in the preautophagosomal structure membrane. The catalysed reaction is a sterol + UDP-alpha-D-glucose = a sterol 3-beta-D-glucoside + UDP + H(+). It catalyses the reaction ergosterol + UDP-alpha-D-glucose = ergosteryl 3-beta-D-glucoside + UDP + H(+). Its function is as follows. Sterol glycosyltransferase responsible for the glycosylation of ergosterol to form ergosterol-glucoside. The protein is Sterol 3-beta-glucosyltransferase of Emericella nidulans (strain FGSC A4 / ATCC 38163 / CBS 112.46 / NRRL 194 / M139) (Aspergillus nidulans).